The sequence spans 216 residues: MTSYKNNNVISLCIMGDGGVGKTAVTIQFISNHFVYYYDPTIEDSYRKQCLVDDQVYMLDILDTAGQDELTAMRDQWIRSCEGFILVYSVTSRSSFDQIQFFREQIIRVLDSDDVPIMMIGNKIDLDDERQVTFQEGKDLARCLGMSFMEVSAKNRTNVEEVFNETVRIVKRKEDPQSHKPSKDSDSKKPLVNTSKIIKKINTRVKQTKTSICKMM.

A GTP-binding site is contributed by 16 to 23; it reads GDGGVGKT. The short motif at 38–46 is the Effector region element; sequence YDPTIEDSY. GTP is bound by residues 63–67 and 122–125; these read DTAGQ and NKID. Residues 171–193 are disordered; that stretch reads KRKEDPQSHKPSKDSDSKKPLVN. Residues 172–189 show a composition bias toward basic and acidic residues; that stretch reads RKEDPQSHKPSKDSDSKK. Cys213 is subject to Cysteine methyl ester. Cys213 carries the S-geranylgeranyl cysteine lipid modification. A propeptide spans 214-216 (removed in mature form); sequence KMM.

It belongs to the small GTPase superfamily. Ras family.

Its subcellular location is the cell membrane. The enzyme catalyses GTP + H2O = GDP + phosphate + H(+). Functionally, ras proteins bind GDP/GTP and possess intrinsic GTPase activity. The sequence is that of Ras-like protein rasW (rasW) from Dictyostelium discoideum (Social amoeba).